Consider the following 671-residue polypeptide: Solute carrier family 5 member 4 (671 aa).

At 1–38 (MPAMGTALPRAMASTASVSTSTGSSELSSLSDNINNPA) the chain is on the cytoplasmic side. The helical transmembrane segment at 39-59 (DISVIVIYFVVVMAVGVWAMV) threads the bilayer. At 60 to 65 (KTNRST) the chain is on the extracellular side. The chain crosses the membrane as a helical span at residues 66-86 (VGGFFLAGRSMTWWPMGASLF). The Cytoplasmic segment spans residues 87-89 (ASN). A helical membrane pass occupies residues 90 to 110 (IGSGHFVGLAGTGAATGIAVT). The Extracellular portion of the chain corresponds to 111–116 (AFESHS). A helical transmembrane segment spans residues 117 to 137 (FALLLVLGWFFVPIYIKAGVM). Over 138–159 (TMPEYLRKRFGGKRLQIYLSVL) the chain is Cytoplasmic. A helical membrane pass occupies residues 160 to 180 (SLFICVILTISADIFSGAIFI). A topological domain (extracellular) is located at residue Lys-181. Residues 182–202 (LALGLDLYLAIFILLAITAVF) form a helical membrane-spanning segment. Topologically, residues 203–218 (TITGGLASVIYTDTLQ) are cytoplasmic. Residues 219–239 (AIIMLVGSFILMIYAFVEVGG) form a helical membrane-spanning segment. Residues 240–288 (YESFTEKYMNAIPSVVEGDNLTISPKCYTPQPDSFHIFRDAVTGDIPWP) lie on the Extracellular side of the membrane. The chain crosses the membrane as a helical span at residues 289-309 (GTAFGMPITALWYWCINQVIV). The Cytoplasmic portion of the chain corresponds to 310 to 324 (QRCLCGKNMSHVKAA). Residues 325–345 (CIVCGYLKLLPIFFMVMPGMI) traverse the membrane as a helical segment. Residues 346 to 378 (SRILYTDMVACVVPSECVKQCGVDVGCTNYAYP) lie on the Extracellular side of the membrane. A helical membrane pass occupies residues 379–399 (MLVLKLMPMGLRGLMLSVMLA). The Cytoplasmic segment spans residues 400–434 (SLMSSLTSIFNSASTLFTMDLYTKIRKKASERELL). The chain crosses the membrane as a helical span at residues 435–455 (IAGRLFVSVLIVTSILWVPIV). Over 456 to 467 (EVSQGGQLIHYT) the chain is Extracellular. Residues 468–488 (EAISSYLGPPIAAVFLVAIFC) traverse the membrane as a helical segment. Topologically, residues 489–494 (KRVNEQ) are cytoplasmic. The helical transmembrane segment at 495–515 (GAFWGLMVGLVLGLIRMIAEF) threads the bilayer. Residues 516–537 (SYGTGSCLAPSSCPKVICGVHY) lie on the Extracellular side of the membrane. The helical transmembrane segment at 538–558 (LYYAIILFFVSILVILGVSYL) threads the bilayer. The Cytoplasmic segment spans residues 559-650 (TKPIPDVHLY…DTSEKPFWRT (92 aa)). A compositionally biased stretch (acidic residues) spans 583 to 593 (DLDAEDREENE). The tract at residues 583–604 (DLDAEDREENEADARTEEDQTE) is disordered. Basic and acidic residues predominate over residues 594 to 604 (ADARTEEDQTE). The chain crosses the membrane as a helical span at residues 651-671 (VVNVNVIVLLAVAAFFYGYFA).

This sequence belongs to the sodium:solute symporter (SSF) (TC 2.A.21) family.

It is found in the cell membrane. Its function is as follows. Generates D-glucose-induced depolarization in a pH-dependent and Na(+)-independent manner, with activity in acidic conditions (pH 5) but not neutral conditions. The chain is Solute carrier family 5 member 4 from Rattus norvegicus (Rat).